Consider the following 211-residue polypeptide: ATP phosphoribosyltransferase (211 aa).

The protein belongs to the ATP phosphoribosyltransferase family. Short subfamily. Heteromultimer composed of HisG and HisZ subunits.

The protein localises to the cytoplasm. It carries out the reaction 1-(5-phospho-beta-D-ribosyl)-ATP + diphosphate = 5-phospho-alpha-D-ribose 1-diphosphate + ATP. It participates in amino-acid biosynthesis; L-histidine biosynthesis; L-histidine from 5-phospho-alpha-D-ribose 1-diphosphate: step 1/9. In terms of biological role, catalyzes the condensation of ATP and 5-phosphoribose 1-diphosphate to form N'-(5'-phosphoribosyl)-ATP (PR-ATP). Has a crucial role in the pathway because the rate of histidine biosynthesis seems to be controlled primarily by regulation of HisG enzymatic activity. The protein is ATP phosphoribosyltransferase of Bacillus cereus (strain 03BB102).